The following is a 363-amino-acid chain: tRNA/tmRNA (uracil-C(5))-methyltransferase (363 aa).

S-adenosyl-L-methionine is bound by residues glutamine 187, tyrosine 215, asparagine 220, glutamate 236, and aspartate 296. The Nucleophile role is filled by cysteine 321. Glutamate 355 serves as the catalytic Proton acceptor.

Belongs to the class I-like SAM-binding methyltransferase superfamily. RNA M5U methyltransferase family. TrmA subfamily.

The enzyme catalyses uridine(54) in tRNA + S-adenosyl-L-methionine = 5-methyluridine(54) in tRNA + S-adenosyl-L-homocysteine + H(+). It catalyses the reaction uridine(341) in tmRNA + S-adenosyl-L-methionine = 5-methyluridine(341) in tmRNA + S-adenosyl-L-homocysteine + H(+). Functionally, dual-specificity methyltransferase that catalyzes the formation of 5-methyluridine at position 54 (m5U54) in all tRNAs, and that of position 341 (m5U341) in tmRNA (transfer-mRNA). This chain is tRNA/tmRNA (uracil-C(5))-methyltransferase, found in Haemophilus influenzae (strain PittEE).